Reading from the N-terminus, the 342-residue chain is Renalase (342 aa).

A signal peptide spans Met-1 to Ala-17. FAD is bound by residues Thr-12, Arg-42, and Gln-61 to Tyr-62.

The protein belongs to the renalase family. FAD is required as a cofactor. In terms of tissue distribution, expressed predominantly in kidney and testis with lower levels in liver, heart and embryo and weak expression in brain and skeletal muscle.

The protein resides in the secreted. The enzyme catalyses 1,2-dihydro-beta-NAD + O2 + H(+) = H2O2 + NAD(+). It catalyses the reaction 1,2-dihydro-beta-NADP + O2 + H(+) = H2O2 + NADP(+). The catalysed reaction is 1,6-dihydro-beta-NADP + O2 + H(+) = H2O2 + NADP(+). It carries out the reaction 1,6-dihydro-beta-NAD + O2 + H(+) = H2O2 + NAD(+). Catalyzes the oxidation of the less abundant 1,2-dihydro-beta-NAD(P) and 1,6-dihydro-beta-NAD(P) to form beta-NAD(P)(+). The enzyme hormone is secreted by the kidney, and circulates in blood and modulates cardiac function and systemic blood pressure. Lowers blood pressure in vivo by decreasing cardiac contractility and heart rate and preventing a compensatory increase in peripheral vascular tone, suggesting a causal link to the increased plasma catecholamine and heightened cardiovascular risk. High concentrations of catecholamines activate plasma renalase and promotes its secretion and synthesis. The polypeptide is Renalase (Mus musculus (Mouse)).